The following is a 484-amino-acid chain: Ribosomal protein uS12 methylthiotransferase RimO (484 aa).

The 112-residue stretch at 8 to 119 (RRVAMVTLGC…LAERLDDVLA (112 aa)) folds into the MTTase N-terminal domain. 6 residues coordinate [4Fe-4S] cluster: C17, C53, C82, C184, C188, and C191. The region spanning 170 to 401 (LDDSPLAALK…ALADELVAQR (232 aa)) is the Radical SAM core domain. The TRAM domain maps to 403–469 (EDRVGTEVRV…GVDLVVRPVG (67 aa)).

The protein belongs to the methylthiotransferase family. RimO subfamily. [4Fe-4S] cluster serves as cofactor.

It is found in the cytoplasm. The enzyme catalyses L-aspartate(89)-[ribosomal protein uS12]-hydrogen + (sulfur carrier)-SH + AH2 + 2 S-adenosyl-L-methionine = 3-methylsulfanyl-L-aspartate(89)-[ribosomal protein uS12]-hydrogen + (sulfur carrier)-H + 5'-deoxyadenosine + L-methionine + A + S-adenosyl-L-homocysteine + 2 H(+). Its function is as follows. Catalyzes the methylthiolation of an aspartic acid residue of ribosomal protein uS12. This Saccharopolyspora erythraea (strain ATCC 11635 / DSM 40517 / JCM 4748 / NBRC 13426 / NCIMB 8594 / NRRL 2338) protein is Ribosomal protein uS12 methylthiotransferase RimO.